We begin with the raw amino-acid sequence, 414 residues long: Protein MAK11 (414 aa).

An N-acetylserine modification is found at Ser2. 6 WD repeats span residues Ala50–Asp78, Ser90–Arg135, Gly147–Asn177, Leu189–Glu221, Leu238–Pro267, and Gly298–Asp330. 2 positions are modified to phosphoserine: Ser376 and Ser380. Residue Thr382 is modified to Phosphothreonine.

As to quaternary structure, associates with 60S pre-ribosomal particles.

Its subcellular location is the nucleus. It is found in the nucleolus. It localises to the nucleus membrane. Its function is as follows. Essential for cell growth. Plays a role in assembly of 60S pre-ribosomal particles in the nucleolus. Also required for replication of the M1 double-stranded RNA of the L-A virus. This latter function may reflect an enhanced requirement for free 60S ribosomal particles for the translation of viral mRNAs which lack poly-A tails. The protein is Protein MAK11 (MAK11) of Saccharomyces cerevisiae (strain ATCC 204508 / S288c) (Baker's yeast).